Here is a 1199-residue protein sequence, read N- to C-terminus: MVRLLLIFFPMIFLEMSILPRMPDRKVLLAGASSQRSVARMDGDVIIGALFSVHHQPPAEKVPERKCGEIREQYGIQRVEAMFHTLDKINADPVLLPNITLGSEIRDSCWHSSVALEQSIEFIRDSLISIRDEKDGLNRCLPDGQTLPPGRTKKPIAGVIGPGSSSVAIQVQNLLQLFDIPQIAYSATSIDLSDKTLYKYFLRVVPSDTLQARAMLDIVKRYNWTYVSAVHTEGNYGESGMDAFKELAAQEGLCIAHSDKIYSNAGEKSFDRLLRKLRERLPKARVVVCFCEGMTVRGLLSAMRRLGVVGEFSLIGSDGWADRDEVIEGYEVEANGGITIKLQSPEVRSFDDYFLKLRLDTNTRNPWFPEFWQHRFQCRLPGHLLENPNFKKVCTGNESLEENYVQDSKMGFVINAIYAMAHGLQNMHHALCPGYVGLCDAMKPIDGRKLLDFLIKSSFVGVSGEEVWFDEKGDAPGRYDIMNLQYTEANRYDYVHVGTWHEGVLNIDDYKIQMNKSGMVRSVCSEPCLKGQIKVIRKGEVSCCWICTACKENEFVQDEFTCRACDLGWWPNAELTGCEPITIRYLEWSDIESIIAIAFSCLGILVTLFVTLIFVLYRDTPVVKSSSRELCYIILAGIFLGYVCPFTLIAKPTTTSCYLQRLLVGLSSAMCYSALVTKTNRIARILAGSKKKICTRKPRFMSAWAQVIIASILISVQLTLVVTLIIMEPPMPILSYPSIKEVYLICNTSNLGVVAPVGYNGLLIMSCTYYAFKTRNVPANFNEAKYIAFTMYTTCIIWLAFVPIYFGSNYKIITTCFAVSLSVTVALGCMFTPKMYIIIAKPERNVRSAFTTSDVVRMHVGDGKLPCRSNTFLNIFRRKKPGAGNANSNGKSVSWSEPGGRQAPKGQHVWQRLSVHVKTNETACNQTAVIKPLTKSYQGSGKSLTFSDASTKTLYNVEEEDNTPSTHFSPPSSPSMVVHRRGPPVATTPPLPPHLSAEETPLFLADSVIPKGLPPPLPQQQQQPPPQPPPQQPKSLMDQLQGVVTNFGSGIPDFHAVLAGPGTPGNGLRSLYPPPPPPQHLQMLPLQLSTFREEPISPPGEDDDDDSSERFKLLQEFVYEREGNTEEDDLEEEEDLPAASKLTPEDSPALTPPSPFRDSVASGSSVPSSPVSESVLCTPPNVTYASVILRDYKQSSSTL.

The N-terminal stretch at 1 to 20 (MVRLLLIFFPMIFLEMSILP) is a signal peptide. Residues 21 to 592 (RMPDRKVLLA…IRYLEWSDIE (572 aa)) are Extracellular-facing. A disulfide bridge links Cys-67 with Cys-109. Residue Tyr-74 participates in L-glutamate binding. The N-linked (GlcNAc...) asparagine glycan is linked to Asn-98. Residues Ser-165 and 186–188 (SAT) each bind L-glutamate. Asn-223 is a glycosylation site (N-linked (GlcNAc...) asparagine). Tyr-236 lines the L-glutamate pocket. A disulfide bridge connects residues Cys-289 and Cys-291. Asp-318 contributes to the L-glutamate binding site. An intrachain disulfide couples Cys-378 to Cys-394. An N-linked (GlcNAc...) asparagine glycan is attached at Asn-397. An L-glutamate-binding site is contributed by Lys-409. A disulfide bond links Cys-432 and Cys-439. Asn-515 carries an N-linked (GlcNAc...) asparagine glycan. The helical transmembrane segment at 593–615 (SIIAIAFSCLGILVTLFVTLIFV) threads the bilayer. The Cytoplasmic portion of the chain corresponds to 616–629 (LYRDTPVVKSSSRE). Residues 630–650 (LCYIILAGIFLGYVCPFTLIA) traverse the membrane as a helical segment. The Extracellular portion of the chain corresponds to 651–658 (KPTTTSCY). Cys-657 and Cys-746 are joined by a disulfide. Residues 659-680 (LQRLLVGLSSAMCYSALVTKTN) form a helical membrane-spanning segment. Residues 681-703 (RIARILAGSKKKICTRKPRFMSA) are Cytoplasmic-facing. A helical transmembrane segment spans residues 704–727 (WAQVIIASILISVQLTLVVTLIIM). Over 728–750 (EPPMPILSYPSIKEVYLICNTSN) the chain is Extracellular. A glycan (N-linked (GlcNAc...) asparagine) is linked at Asn-747. A helical transmembrane segment spans residues 751–772 (LGVVAPVGYNGLLIMSCTYYAF). Residues 773-785 (KTRNVPANFNEAK) are Cytoplasmic-facing. The chain crosses the membrane as a helical span at residues 786 to 807 (YIAFTMYTTCIIWLAFVPIYFG). Residues 808–815 (SNYKIITT) lie on the Extracellular side of the membrane. A helical transmembrane segment spans residues 816–840 (CFAVSLSVTVALGCMFTPKMYIIIA). The Cytoplasmic portion of the chain corresponds to 841–1199 (KPERNVRSAF…RDYKQSSSTL (359 aa)). Ser-853 carries the phosphoserine modification. A Phosphothreonine modification is found at Thr-871. Disordered regions lie at residues 882–906 (GAGNANSNGKSVSWSEPGGRQAPKG), 959–1035 (EEDN…QPKS), and 1055–1082 (HAVLAGPGTPGNGLRSLYPPPPPPQHLQ). Polar residues predominate over residues 885-895 (NANSNGKSVSW). Residues Ser-894 and Ser-969 each carry the phosphoserine modification. Positions 1012–1032 (GLPPPLPQQQQQPPPQPPPQQ) are enriched in pro residues. Ser-1097 is subject to Phosphoserine. The disordered stretch occupies residues 1118-1177 (VYEREGNTEEDDLEEEEDLPAASKLTPEDSPALTPPSPFRDSVASGSSVPSSPVSESVLC). Over residues 1125-1136 (TEEDDLEEEEDL) the composition is skewed to acidic residues. Ser-1147 is modified (phosphoserine). Residue Thr-1151 is modified to Phosphothreonine. The residue at position 1154 (Ser-1154) is a Phosphoserine. Low complexity predominate over residues 1159 to 1175 (SVASGSSVPSSPVSESV).

Belongs to the G-protein coupled receptor 3 family. As to quaternary structure, homodimer; disulfide-linked. The PPXXF motif binds HOMER1, HOMER2 and HOMER3. Interacts with TAMALIN. Interacts with RYR1, RYR2, ITPR1, SHANK1 and SHANK3. Interacts with SHIA1. Expressed in the striatum (at protein level). Expressed in type II unipolar brush cells of the cerebellum (at protein level).

It is found in the cell membrane. It localises to the postsynaptic cell membrane. The protein resides in the cell projection. The protein localises to the dendrite. In terms of biological role, G-protein coupled receptor for glutamate. Ligand binding causes a conformation change that triggers signaling via guanine nucleotide-binding proteins (G proteins) and modulates the activity of down-stream effectors. Signaling activates a phosphatidylinositol-calcium second messenger system. May participate in the central action of glutamate in the CNS, such as long-term potentiation in the hippocampus and long-term depression in the cerebellum (By. similarity). May function in the light response in the retina. Induces GRID1 and GRID2 cation-channel activation via GNAQ-PLC-PKC pathway in dopaminergic neurons and cerebellar Purkinje cell, respectively. The polypeptide is Metabotropic glutamate receptor 1 (Grm1) (Mus musculus (Mouse)).